The sequence spans 757 residues: Catalase-peroxidase (757 aa).

Residues 101–248 constitute a cross-link (tryptophyl-tyrosyl-methioninium (Trp-Tyr) (with M-274)); that stretch reads WHSAGTYRIG…LAAVQMGLIY (148 aa). The Proton acceptor role is filled by His102. A disordered region spans residues 213-232; it reads VHHPDEHRGAKEKASKNSDS. The segment at residues 248 to 274 is a cross-link (tryptophyl-tyrosyl-methioninium (Tyr-Met) (with W-101)); the sequence is YVNPEGPDGCPDPLASARDIRETFARM. His289 lines the heme b pocket.

It belongs to the peroxidase family. Peroxidase/catalase subfamily. Homodimer or homotetramer. It depends on heme b as a cofactor. Post-translationally, formation of the three residue Trp-Tyr-Met cross-link is important for the catalase, but not the peroxidase activity of the enzyme.

It catalyses the reaction H2O2 + AH2 = A + 2 H2O. The enzyme catalyses 2 H2O2 = O2 + 2 H2O. Functionally, bifunctional enzyme with both catalase and broad-spectrum peroxidase activity. The chain is Catalase-peroxidase from Xylella fastidiosa (strain M23).